We begin with the raw amino-acid sequence, 52 residues long: DNA-directed RNA polymerase subunit Rpo12 (52 aa).

Zn(2+)-binding residues include cysteine 13, cysteine 30, and cysteine 33.

It belongs to the archaeal Rpo12/eukaryotic RPC10 RNA polymerase subunit family. As to quaternary structure, part of the RNA polymerase complex. Zn(2+) is required as a cofactor.

The protein localises to the cytoplasm. The catalysed reaction is RNA(n) + a ribonucleoside 5'-triphosphate = RNA(n+1) + diphosphate. Functionally, DNA-dependent RNA polymerase (RNAP) catalyzes the transcription of DNA into RNA using the four ribonucleoside triphosphates as substrates. This chain is DNA-directed RNA polymerase subunit Rpo12, found in Pyrobaculum neutrophilum (strain DSM 2338 / JCM 9278 / NBRC 100436 / V24Sta) (Thermoproteus neutrophilus).